A 173-amino-acid polypeptide reads, in one-letter code: Protein-export protein SecB (173 aa).

The disordered stretch occupies residues 148-173 (QQQKQRREQGTSDSAPSGSPDNGGRQ). Residues 158–167 (TSDSAPSGSP) are compositionally biased toward polar residues.

The protein belongs to the SecB family. Homotetramer, a dimer of dimers. One homotetramer interacts with 1 SecA dimer.

It localises to the cytoplasm. Its function is as follows. One of the proteins required for the normal export of preproteins out of the cell cytoplasm. It is a molecular chaperone that binds to a subset of precursor proteins, maintaining them in a translocation-competent state. It also specifically binds to its receptor SecA. The polypeptide is Protein-export protein SecB (Halorhodospira halophila (strain DSM 244 / SL1) (Ectothiorhodospira halophila (strain DSM 244 / SL1))).